We begin with the raw amino-acid sequence, 362 residues long: Protein-glutamate methylesterase/protein-glutamine glutaminase (362 aa).

In terms of domain architecture, Response regulatory spans 10-127 (RVLVVDDSAF…SLNMHVARDE (118 aa)). Asp-61 is modified (4-aspartylphosphate). The region spanning 173-362 (RLPRRLVLIG…DAITRAVGEG (190 aa)) is the CheB-type methylesterase domain. Active-site residues include Ser-184, His-211, and Asp-304.

The protein belongs to the CheB family. Phosphorylated by CheA. Phosphorylation of the N-terminal regulatory domain activates the methylesterase activity.

It is found in the cytoplasm. The enzyme catalyses [protein]-L-glutamate 5-O-methyl ester + H2O = L-glutamyl-[protein] + methanol + H(+). The catalysed reaction is L-glutaminyl-[protein] + H2O = L-glutamyl-[protein] + NH4(+). Involved in chemotaxis. Part of a chemotaxis signal transduction system that modulates chemotaxis in response to various stimuli. Catalyzes the demethylation of specific methylglutamate residues introduced into the chemoreceptors (methyl-accepting chemotaxis proteins or MCP) by CheR. Also mediates the irreversible deamidation of specific glutamine residues to glutamic acid. The sequence is that of Protein-glutamate methylesterase/protein-glutamine glutaminase from Symbiobacterium thermophilum (strain DSM 24528 / JCM 14929 / IAM 14863 / T).